The sequence spans 471 residues: Mitochondrial distribution and morphology protein 10 (471 aa).

Residues 313-338 form a disordered region; that stretch reads SNSAATPPRIKNSDSQVLSNNSTDSK. Residues 325 to 338 are compositionally biased toward polar residues; the sequence is SDSQVLSNNSTDSK.

It belongs to the MDM10 family. In terms of assembly, component of the ER-mitochondria encounter structure (ERMES) or MDM complex, composed of MMM1, MDM10, MDM12 and MDM34. Associates with the mitochondrial outer membrane sorting assembly machinery SAM(core) complex.

Its subcellular location is the mitochondrion outer membrane. In terms of biological role, component of the ERMES/MDM complex, which serves as a molecular tether to connect the endoplasmic reticulum and mitochondria. Components of this complex are involved in the control of mitochondrial shape and protein biogenesis and may function in phospholipid exchange. MDM10 is involved in the late assembly steps of the general translocase of the mitochondrial outer membrane (TOM complex). Functions in the TOM40-specific route of the assembly of outer membrane beta-barrel proteins, including the association of TOM40 with the receptor TOM22 and small TOM proteins. Can associate with the SAM(core) complex as well as the MDM12-MMM1 complex, both involved in late steps of the major beta-barrel assembly pathway, that is responsible for biogenesis of all outer membrane beta-barrel proteins. May act as a switch that shuttles between both complexes and channels precursor proteins into the TOM40-specific pathway. Plays a role in mitochondrial morphology and in the inheritance of mitochondria. The sequence is that of Mitochondrial distribution and morphology protein 10 from Debaryomyces hansenii (strain ATCC 36239 / CBS 767 / BCRC 21394 / JCM 1990 / NBRC 0083 / IGC 2968) (Yeast).